A 310-amino-acid chain; its full sequence is tRNA uridine(34) hydroxylase (310 aa).

The region spanning 127–225 (KDKNTIVVDT…YLEDMSKEES (99 aa)) is the Rhodanese domain. Catalysis depends on Cys185, which acts as the Cysteine persulfide intermediate.

Belongs to the TrhO family.

The enzyme catalyses uridine(34) in tRNA + AH2 + O2 = 5-hydroxyuridine(34) in tRNA + A + H2O. Its function is as follows. Catalyzes oxygen-dependent 5-hydroxyuridine (ho5U) modification at position 34 in tRNAs. This is tRNA uridine(34) hydroxylase from Prochlorococcus marinus subsp. pastoris (strain CCMP1986 / NIES-2087 / MED4).